The following is a 475-amino-acid chain: Fez family zinc finger protein 1 (475 aa).

An Engrailed homology 1 repressor motif is present at residues 28 to 43; the sequence is PLAFSIERIMARTPEP. 6 C2H2-type zinc fingers span residues 260 to 282, 288 to 310, 316 to 338, 344 to 366, 372 to 394, and 400 to 423; these read FTCEVCGKVFNAHYNLTRHMPVH, FVCKVCGKGFRQASTLCRHKIIH, HKCNQCGKAFNRSSTLNTHTRIH, FVCEFCGKGFHQKGNYKNHKLTH, FKCNICNKAFHQVYNLTFHMHTH, and FTCPTCGKGFCRNFDLKKHVRKLH. The segment at 425–475 is disordered; that stretch reads SSLGLTRTPTGEPSSDPPPQLQQPPPAPLPPLQPTLPPPGPLPSGLHQGHQ. Positions 427–437 are enriched in polar residues; sequence LGLTRTPTGEP. The span at 439–466 shows a compositional bias: pro residues; that stretch reads SDPPPQLQQPPPAPLPPLQPTLPPPGPL.

Belongs to the krueppel C2H2-type zinc-finger protein family.

The protein resides in the nucleus. In terms of biological role, transcription repressor. Involved in the axonal projection and proper termination of olfactory sensory neurons (OSN). Plays a role in rostro-caudal patterning of the diencephalon and in prethalamic formation. Expression is required in OSN to cell-autonomously regulate OSN axon projections. Regulates non-cell-autonomously the layer formation of the olfactory bulb development and the interneurons. May be required for correct rostral migration of the interneuron progenitors. This Mus musculus (Mouse) protein is Fez family zinc finger protein 1 (Fezf1).